A 142-amino-acid polypeptide reads, in one-letter code: MATFKLIVVSAEQHIFNGEVKGIQATGSEGELGILAGHLPLLTAIKPGIIKITLEDDTEEVIYISGGFLEVQPTIVTVLADVAIRGKELDRERILEAKRKAEQNIVSGAKDANYEMLVSKLSRELAKLRAYELTDRLTQRKR.

The protein belongs to the ATPase epsilon chain family. In terms of assembly, F-type ATPases have 2 components, CF(1) - the catalytic core - and CF(0) - the membrane proton channel. CF(1) has five subunits: alpha(3), beta(3), gamma(1), delta(1), epsilon(1). CF(0) has three main subunits: a, b and c.

It is found in the cell inner membrane. Functionally, produces ATP from ADP in the presence of a proton gradient across the membrane. In Histophilus somni (strain 129Pt) (Haemophilus somnus), this protein is ATP synthase epsilon chain.